The following is a 148-amino-acid chain: Large ribosomal subunit protein bL9 (148 aa).

This sequence belongs to the bacterial ribosomal protein bL9 family.

In terms of biological role, binds to the 23S rRNA. This is Large ribosomal subunit protein bL9 from Pseudomonas fluorescens (strain SBW25).